The chain runs to 755 residues: Histone-lysine N-methyltransferase, H3 lysine-9 specific SUVH8 (755 aa).

Disordered stretches follow at residues 62 to 98 (YDRDAGPSTGPVHRERSDAVNEEAHATSIPPHAPPQT) and 111 to 243 (YDRD…KMVI). 2 stretches are compositionally biased toward basic and acidic residues: residues 73-86 (VHRERSDAVNEEAH) and 122-135 (IDREASHEVNEDAH). Residues 174–186 (KRGRGRPKGSKNG) constitute a DNA-binding region (a.T hook). A compositionally biased stretch (basic residues) spans 174-193 (KRGRGRPKGSKNGSRKPKKP). Residues 197–207 (DNNSTDASAGP) are compositionally biased toward polar residues. A compositionally biased stretch (basic residues) spans 212–231 (GKRRCGRPKGLKNRSRKPKK). Positions 310–448 (GPIPGVQVGD…FKEYRFKLLR (139 aa)) constitute a YDG domain. A Pre-SET domain is found at 528 to 578 (QSLVQSYIHQNCTCILKNCGQLPYHDNILVCRKPLIYECGGSCPTRMVETG). An SET domain is found at 581–723 (LHLEVFKTSN…PMTELTYDYG (143 aa)). S-adenosyl-L-methionine-binding positions include 591–593 (CGW), Asp624, Tyr626, Arg676, and 679–680 (NH). Cys682, Cys743, Cys745, and Cys750 together coordinate Zn(2+). In terms of domain architecture, Post-SET spans 739-755 (GKKICLCGSVKCRGSFG).

The protein belongs to the class V-like SAM-binding methyltransferase superfamily. Histone-lysine methyltransferase family. Suvar3-9 subfamily.

The protein resides in the nucleus. It is found in the chromosome. It localises to the centromere. The enzyme catalyses N(6)-methyl-L-lysyl(9)-[histone H3] + S-adenosyl-L-methionine = N(6),N(6)-dimethyl-L-lysyl(9)-[histone H3] + S-adenosyl-L-homocysteine + H(+). It catalyses the reaction L-lysyl(9)-[histone H3] + S-adenosyl-L-methionine = N(6)-methyl-L-lysyl(9)-[histone H3] + S-adenosyl-L-homocysteine + H(+). Functionally, histone methyltransferase. Methylates 'Lys-9' of histone H3. H3 'Lys-9' methylation represents a specific tag for epigenetic transcriptional repression. The protein is Histone-lysine N-methyltransferase, H3 lysine-9 specific SUVH8 (SUVH8) of Arabidopsis thaliana (Mouse-ear cress).